Reading from the N-terminus, the 132-residue chain is 3-aminoacrylate deaminase RutC (132 aa).

It belongs to the RutC family.

The catalysed reaction is (Z)-3-aminoacrylate + H2O + H(+) = 3-oxopropanoate + NH4(+). In terms of biological role, involved in pyrimidine catabolism. Catalyzes the deamination of 3-aminoacrylate to malonic semialdehyde, a reaction that can also occur spontaneously. RutC may facilitate the reaction and modulate the metabolic fitness, rather than catalyzing essential functions. This is 3-aminoacrylate deaminase RutC from Cronobacter turicensis (strain DSM 18703 / CCUG 55852 / LMG 23827 / z3032).